Consider the following 721-residue polypeptide: Glucans biosynthesis glucosyltransferase H (721 aa).

6 helical membrane-spanning segments follow: residues 53–75 (VLIM…QVLQ), 85–107 (VVLV…ALAG), 404–426 (GIGA…LISL), 456–478 (WVFA…LVLI), 490–512 (LRTF…VMMV), and 567–589 (WPLL…VALL).

The protein belongs to the glycosyltransferase 2 family. OpgH subfamily.

The protein localises to the cell inner membrane. Its pathway is glycan metabolism; osmoregulated periplasmic glucan (OPG) biosynthesis. In terms of biological role, involved in the biosynthesis of osmoregulated periplasmic glucans (OPGs). The chain is Glucans biosynthesis glucosyltransferase H from Rhodopseudomonas palustris (strain ATCC BAA-98 / CGA009).